Here is a 248-residue protein sequence, read N- to C-terminus: Pyridoxine 5'-phosphate synthase (248 aa).

Residue Asn-7 coordinates 3-amino-2-oxopropyl phosphate. 9–10 serves as a coordination point for 1-deoxy-D-xylulose 5-phosphate; that stretch reads DH. Arg-18 serves as a coordination point for 3-amino-2-oxopropyl phosphate. His-43 serves as the catalytic Proton acceptor. 1-deoxy-D-xylulose 5-phosphate is bound by residues Arg-45 and His-50. Glu-70 functions as the Proton acceptor in the catalytic mechanism. Thr-100 lines the 1-deoxy-D-xylulose 5-phosphate pocket. The active-site Proton donor is His-191. Residues Gly-192 and 213–214 contribute to the 3-amino-2-oxopropyl phosphate site; that span reads GH.

Belongs to the PNP synthase family. In terms of assembly, homooctamer; tetramer of dimers.

The protein localises to the cytoplasm. It catalyses the reaction 3-amino-2-oxopropyl phosphate + 1-deoxy-D-xylulose 5-phosphate = pyridoxine 5'-phosphate + phosphate + 2 H2O + H(+). The protein operates within cofactor biosynthesis; pyridoxine 5'-phosphate biosynthesis; pyridoxine 5'-phosphate from D-erythrose 4-phosphate: step 5/5. Its function is as follows. Catalyzes the complicated ring closure reaction between the two acyclic compounds 1-deoxy-D-xylulose-5-phosphate (DXP) and 3-amino-2-oxopropyl phosphate (1-amino-acetone-3-phosphate or AAP) to form pyridoxine 5'-phosphate (PNP) and inorganic phosphate. This chain is Pyridoxine 5'-phosphate synthase, found in Bordetella bronchiseptica (strain ATCC BAA-588 / NCTC 13252 / RB50) (Alcaligenes bronchisepticus).